The chain runs to 313 residues: Malate dehydrogenase (313 aa).

Residues 11–16 and Asp-35 contribute to the NAD(+) site; that span reads GAGNIG. Substrate is bound by residues Arg-84 and Arg-90. Residues Asn-97 and 120–122 contribute to the NAD(+) site; that span reads VTN. Positions 122 and 153 each coordinate substrate. His-177 (proton acceptor) is an active-site residue.

This sequence belongs to the LDH/MDH superfamily. MDH type 3 family.

It catalyses the reaction (S)-malate + NAD(+) = oxaloacetate + NADH + H(+). In terms of biological role, catalyzes the reversible oxidation of malate to oxaloacetate. The polypeptide is Malate dehydrogenase (Ehrlichia canis (strain Jake)).